We begin with the raw amino-acid sequence, 617 residues long: MVVPRGQEHRAPQEVETREDEEQNIKLTEILELLVAAGYFRARIKGLSPFDKVVGGMTWCITTCNFDIDIDLLFQENSTIGQKIALTEKIVSVLPKMKCPHRLEPHQIQGLDFIHIFPVVQWLVKRAIETREEMGDYIRSYSISQFQKTHRLPEDDEFMQRKEKAIKTVTDIFEVYKPQRKYKRQKGAEEILDEESKVHATLLEYGRRYGFSRQAGKTEQTEDKKIVLPSGLAAAGKAEPCDEDDLRAAEELRIKTLMTGMAAMATEEGKLTASTVGQIVGLQSDEIKQIVSEYAEKQSELSAEERPERLGAAQQHRRKVASLNKQILQKTKLLEELQAKFVDLQAKCTEAKKTLTEVESYSEKLDKELAALETIESQADSSVLQNLRMLVAINENLKSQEQEFKAHCREEMERLQQDIENLKAEAAENGEEEEPNKLIDQQYQTEKEKLQKIRLLLARRNREIAILQRKIDEVPSRAELTQYQKRFIELYSQVSATHKETKQFFTLYNTLDDKKVYLEKEVNLLNSIHDNFHQAMASSGSREQFLRQMEQIVEGIKQNRMKMEKKKQENKMRRDQLNDEYLELLEKQRLYFKTVKEFKEECRKNEMLLSKLKASSS.

Positions 1–16 are enriched in basic and acidic residues; it reads MVVPRGQEHRAPQEVE. Residues 1–20 form a disordered region; it reads MVVPRGQEHRAPQEVETRED. Coiled coils occupy residues 285 to 474 and 546 to 614; these read DEIK…IDEV and LRQM…KLKA.

The protein belongs to the CCDC93 family.

The protein resides in the early endosome. Its function is as follows. May be involved in copper-dependent ATP7A trafficking between the trans-Golgi network and vesicles in the cell periphery. The chain is Coiled-coil domain-containing protein 93 (CCDC93) from Gallus gallus (Chicken).